Here is a 495-residue protein sequence, read N- to C-terminus: Probable staphylococcal-like nuclease CAN4 (495 aa).

G2 is lipidated: N-myristoyl glycine. C11 carries the S-palmitoyl cysteine lipid modification. 2 disordered regions span residues 45 to 68 and 81 to 101; these read DLQV…RPAL and LQVP…PPRP. The span at 50 to 66 shows a compositional bias: pro residues; that stretch reads LSPPPPSTRQQQPPPRP. In terms of domain architecture, TNase-like spans 297–470; it reads KTLPVNAKCI…RDARQGLWAY (174 aa). D310 contacts Ca(2+). Residue R377 is part of the active site. D382 serves as a coordination point for Ca(2+). Catalysis depends on residues E385 and R419.

This sequence belongs to the thermonuclease family. Requires Ca(2+) as cofactor.

The protein resides in the cell membrane. Its function is as follows. Enzyme that catalyzes the hydrolysis of both DNA and RNA at the 5' position of the phosphodiester bond. In Oryza sativa subsp. japonica (Rice), this protein is Probable staphylococcal-like nuclease CAN4.